Consider the following 563-residue polypeptide: Eukaryotic translation initiation factor 3 subunit D-1 (563 aa).

Positions 98–167 (VQKPPHQRGR…GPPPKMRESS (70 aa)) are disordered. Residues 100–121 (KPPHQRGRFRNMRNSRSGRGRN) show a composition bias toward basic residues. T128 carries the post-translational modification Phosphothreonine. Positions 291–305 (EFDLLTVNESSVEPP) are RNA gate.

The protein belongs to the eIF-3 subunit D family. Component of the eukaryotic translation initiation factor 3 (eIF-3) complex. The eIF-3 complex interacts with pix.

It is found in the cytoplasm. Functionally, mRNA cap-binding component of the eukaryotic translation initiation factor 3 (eIF-3) complex, which is involved in protein synthesis of a specialized repertoire of mRNAs and, together with other initiation factors, stimulates binding of mRNA and methionyl-tRNAi to the 40S ribosome. The eIF-3 complex specifically targets and initiates translation of a subset of mRNAs involved in cell proliferation. In the eIF-3 complex, eif3d specifically recognizes and binds the 7-methylguanosine cap of a subset of mRNAs. This chain is Eukaryotic translation initiation factor 3 subunit D-1, found in Drosophila grimshawi (Hawaiian fruit fly).